We begin with the raw amino-acid sequence, 64 residues long: Large ribosomal subunit protein bL32 (64 aa).

Residues 1-15 (MAVPKRKVSKSRRDS) show a composition bias toward basic residues. The disordered stretch occupies residues 1-21 (MAVPKRKVSKSRRDSRRAQTF).

The protein belongs to the bacterial ribosomal protein bL32 family.

The protein is Large ribosomal subunit protein bL32 of Symbiobacterium thermophilum (strain DSM 24528 / JCM 14929 / IAM 14863 / T).